Consider the following 230-residue polypeptide: Ribonuclease 3 (230 aa).

Positions 10 to 133 constitute an RNase III domain; that stretch reads DPRLQSRIGY…IIGAIYVDSN (124 aa). E46 is a binding site for Mg(2+). D50 is a catalytic residue. The Mg(2+) site is built by D119 and E122. Residue E122 is part of the active site. In terms of domain architecture, DRBM spans 161–230; that stretch reads DPKSRLQEYL…AAEILKLLEQ (70 aa).

It belongs to the ribonuclease III family. Homodimer. Mg(2+) is required as a cofactor.

The protein localises to the cytoplasm. The catalysed reaction is Endonucleolytic cleavage to 5'-phosphomonoester.. In terms of biological role, digests double-stranded RNA. Involved in the processing of primary rRNA transcript to yield the immediate precursors to the large and small rRNAs (23S and 16S). Processes some mRNAs, and tRNAs when they are encoded in the rRNA operon. Processes pre-crRNA and tracrRNA of type II CRISPR loci if present in the organism. This is Ribonuclease 3 from Acinetobacter baylyi (strain ATCC 33305 / BD413 / ADP1).